A 111-amino-acid chain; its full sequence is P antigen family member 2 (111 aa).

A disordered region spans residues M1–P66. Positions R8–V24 are enriched in polar residues.

It belongs to the GAGE family.

The chain is P antigen family member 2 (PAGE2) from Homo sapiens (Human).